A 370-amino-acid chain; its full sequence is tRNA 2-selenouridine synthase (370 aa).

Positions 12–136 (FLEDVPMMDT…MRNFLLDTTR (125 aa)) constitute a Rhodanese domain. The active-site S-selanylcysteine intermediate is cysteine 95.

It belongs to the SelU family. In terms of assembly, monomer.

It carries out the reaction 5-methylaminomethyl-2-thiouridine(34) in tRNA + selenophosphate + (2E)-geranyl diphosphate + H2O + H(+) = 5-methylaminomethyl-2-selenouridine(34) in tRNA + (2E)-thiogeraniol + phosphate + diphosphate. The catalysed reaction is 5-methylaminomethyl-2-thiouridine(34) in tRNA + (2E)-geranyl diphosphate = 5-methylaminomethyl-S-(2E)-geranyl-thiouridine(34) in tRNA + diphosphate. The enzyme catalyses 5-methylaminomethyl-S-(2E)-geranyl-thiouridine(34) in tRNA + selenophosphate + H(+) = 5-methylaminomethyl-2-(Se-phospho)selenouridine(34) in tRNA + (2E)-thiogeraniol. It catalyses the reaction 5-methylaminomethyl-2-(Se-phospho)selenouridine(34) in tRNA + H2O = 5-methylaminomethyl-2-selenouridine(34) in tRNA + phosphate. In terms of biological role, involved in the post-transcriptional modification of the uridine at the wobble position (U34) of tRNA(Lys), tRNA(Glu) and tRNA(Gln). Catalyzes the conversion of 2-thiouridine (S2U-RNA) to 2-selenouridine (Se2U-RNA). Acts in a two-step process involving geranylation of 2-thiouridine (S2U) to S-geranyl-2-thiouridine (geS2U) and subsequent selenation of the latter derivative to 2-selenouridine (Se2U) in the tRNA chain. This Azotobacter vinelandii (strain DJ / ATCC BAA-1303) protein is tRNA 2-selenouridine synthase.